The following is a 254-amino-acid chain: MDQSSEGCMKKISSVNLDKLINDFSQIEKKMVETNGKNNILDIQLEKSNCLLKVMQAKEVSIKEECATLHNIIKGLQQTIEYQQNLKGENEQLKISADLIKEKLKSHEQEYKNNIAKLVSEMKIKEEGYKKEISKLYQDMQRKVELNEEKHKELIEKKEMEISELNAKLRSQEKEKQNEIIKLQLEFDAKLARVQTKSKSYQDSTVLPQSIYRRKLQHFQEEKNKEIAILRNTIRDLEQRLSVGKDSHLKRRRF.

Positions 61 to 246 (SIKEECATLH…LEQRLSVGKD (186 aa)) form a coiled coil.

As to expression, detected in stomach.

In Homo sapiens (Human), this protein is Coiled-coil domain-containing protein 152 (CCDC152).